We begin with the raw amino-acid sequence, 741 residues long: Transcription activator of gluconeogenesis BDBG_05438 (741 aa).

The tract at residues 1–70 (MTASTRNGSP…NAKDPLRPRR (70 aa)) is disordered. A compositionally biased stretch (polar residues) spans 25-61 (KSMTTTPANPPETKSQTNGKGSGTAQSSQKPASTSAN). The segment at residues 77 to 105 (CFACQRAHLTCGDERPCQRCIKRGLQDAC) is a DNA-binding region (zn(2)-C6 fungal-type). Disordered stretches follow at residues 135-163 (QANT…QSVS), 202-239 (SVFH…SVSG), 285-321 (GAGD…NNQS), 401-421 (TNLM…PGLK), 559-590 (GSSL…PHTG), and 655-741 (FHGK…AKRG). The segment covering 202–226 (SVFHAQSPSSTQNFDLSSNPQTQNL) has biased composition (polar residues). The segment covering 227–238 (SSAMSQTASSVS) has biased composition (low complexity). 2 stretches are compositionally biased toward polar residues: residues 291 to 321 (PSDS…NNQS) and 401 to 416 (TNLM…SRIS). A compositionally biased stretch (low complexity) spans 560–572 (SSLSSASSVRGSS). Polar residues predominate over residues 573–586 (TFTPRNNNTHNSID). Residues 672–718 (TGTTTSGDVATTTATGTSTSNGANANTNGNNTNPNDPSTAASSSASS) show a composition bias toward low complexity. Residues 723–732 (RSNHLGKRGG) are compositionally biased toward basic residues.

This sequence belongs to the ERT1/acuK family.

The protein resides in the nucleus. Its function is as follows. Transcription factor which regulates nonfermentable carbon utilization. Activator of gluconeogenetic genes. This is Transcription activator of gluconeogenesis BDBG_05438 from Blastomyces gilchristii (strain SLH14081) (Blastomyces dermatitidis).